Here is an 84-residue protein sequence, read N- to C-terminus: Small ribosomal subunit protein bS18A (84 aa).

The protein belongs to the bacterial ribosomal protein bS18 family. In terms of assembly, part of the 30S ribosomal subunit. Forms a tight heterodimer with protein bS6.

Functionally, binds as a heterodimer with protein bS6 to the central domain of the 16S rRNA, where it helps stabilize the platform of the 30S subunit. This is Small ribosomal subunit protein bS18A from Mycolicibacterium paratuberculosis (strain ATCC BAA-968 / K-10) (Mycobacterium paratuberculosis).